The chain runs to 399 residues: S-adenosylmethionine synthase (399 aa).

His-17 contacts ATP. Asp-19 lines the Mg(2+) pocket. Glu-45 contacts K(+). 2 residues coordinate L-methionine: Glu-58 and Gln-101. Residues 101–111 (QSPDIAQGVDE) form a flexible loop region. ATP-binding positions include 177-179 (DAK), 244-245 (RF), Asp-253, 259-260 (RK), Ala-276, and Lys-280. Asp-253 contacts L-methionine. Lys-284 provides a ligand contact to L-methionine.

The protein belongs to the AdoMet synthase family. In terms of assembly, homotetramer; dimer of dimers. Requires Mg(2+) as cofactor. K(+) serves as cofactor.

It localises to the cytoplasm. The enzyme catalyses L-methionine + ATP + H2O = S-adenosyl-L-methionine + phosphate + diphosphate. It participates in amino-acid biosynthesis; S-adenosyl-L-methionine biosynthesis; S-adenosyl-L-methionine from L-methionine: step 1/1. Its function is as follows. Catalyzes the formation of S-adenosylmethionine (AdoMet) from methionine and ATP. The overall synthetic reaction is composed of two sequential steps, AdoMet formation and the subsequent tripolyphosphate hydrolysis which occurs prior to release of AdoMet from the enzyme. The sequence is that of S-adenosylmethionine synthase from Listeria monocytogenes serotype 4b (strain CLIP80459).